The following is a 394-amino-acid chain: Elongation factor Tu (394 aa).

Residues 10–204 (KAHVNIGTIG…SVDSYIPTPT (195 aa)) enclose the tr-type G domain. The interval 19 to 26 (GHIDHGKT) is G1. 19 to 26 (GHIDHGKT) is a binding site for GTP. Residue T26 coordinates Mg(2+). A G2 region spans residues 60–64 (GITIN). The G3 stretch occupies residues 81-84 (DCPG). Residues 81-85 (DCPGH) and 136-139 (NKCD) contribute to the GTP site. The G4 stretch occupies residues 136–139 (NKCD). A G5 region spans residues 174 to 176 (SAL).

The protein belongs to the TRAFAC class translation factor GTPase superfamily. Classic translation factor GTPase family. EF-Tu/EF-1A subfamily. In terms of assembly, monomer.

It localises to the cytoplasm. The catalysed reaction is GTP + H2O = GDP + phosphate + H(+). Functionally, GTP hydrolase that promotes the GTP-dependent binding of aminoacyl-tRNA to the A-site of ribosomes during protein biosynthesis. This chain is Elongation factor Tu, found in Malacoplasma penetrans (strain HF-2) (Mycoplasma penetrans).